We begin with the raw amino-acid sequence, 252 residues long: Adenosylcobinamide-GDP ribazoletransferase (252 aa).

7 consecutive transmembrane segments (helical) span residues 36 to 56 (LVPIVGLIIGGIMGVTYMLLV), 59 to 79 (FFYKISAVLVLIEYIFLTGGI), 109 to 129 (VGTNAVLAVISVIILNYVILT), 133 to 153 (PAYMVKVIILFPVAGRLGSIV), 170 to 192 (SFIDYCTLKELAIGIILYAVIFL), 199 to 218 (GYIIMIFPILTAVILIKYFT), and 228 to 248 (ILGAVCELNQTFYLMTVYAVL).

The protein belongs to the CobS family. Mg(2+) serves as cofactor.

The protein resides in the cell membrane. The enzyme catalyses alpha-ribazole + adenosylcob(III)inamide-GDP = adenosylcob(III)alamin + GMP + H(+). It catalyses the reaction alpha-ribazole 5'-phosphate + adenosylcob(III)inamide-GDP = adenosylcob(III)alamin 5'-phosphate + GMP + H(+). It participates in cofactor biosynthesis; adenosylcobalamin biosynthesis; adenosylcobalamin from cob(II)yrinate a,c-diamide: step 7/7. In terms of biological role, joins adenosylcobinamide-GDP and alpha-ribazole to generate adenosylcobalamin (Ado-cobalamin). Also synthesizes adenosylcobalamin 5'-phosphate from adenosylcobinamide-GDP and alpha-ribazole 5'-phosphate. The polypeptide is Adenosylcobinamide-GDP ribazoletransferase (Clostridium acetobutylicum (strain ATCC 824 / DSM 792 / JCM 1419 / IAM 19013 / LMG 5710 / NBRC 13948 / NRRL B-527 / VKM B-1787 / 2291 / W)).